Consider the following 248-residue polypeptide: tRNA (guanine-N(1)-)-methyltransferase (248 aa).

S-adenosyl-L-methionine is bound by residues G114 and 134–139 (IGDYVL).

This sequence belongs to the RNA methyltransferase TrmD family. Homodimer.

It localises to the cytoplasm. It carries out the reaction guanosine(37) in tRNA + S-adenosyl-L-methionine = N(1)-methylguanosine(37) in tRNA + S-adenosyl-L-homocysteine + H(+). Its function is as follows. Specifically methylates guanosine-37 in various tRNAs. The sequence is that of tRNA (guanine-N(1)-)-methyltransferase from Blochmanniella floridana.